The primary structure comprises 257 residues: Thiazole synthase (257 aa).

The active-site Schiff-base intermediate with DXP is the K97. 1-deoxy-D-xylulose 5-phosphate contacts are provided by residues G158, 184-185 (AG), and 206-207 (NT).

The protein belongs to the ThiG family. As to quaternary structure, homotetramer. Forms heterodimers with either ThiH or ThiS.

Its subcellular location is the cytoplasm. It catalyses the reaction [ThiS sulfur-carrier protein]-C-terminal-Gly-aminoethanethioate + 2-iminoacetate + 1-deoxy-D-xylulose 5-phosphate = [ThiS sulfur-carrier protein]-C-terminal Gly-Gly + 2-[(2R,5Z)-2-carboxy-4-methylthiazol-5(2H)-ylidene]ethyl phosphate + 2 H2O + H(+). It participates in cofactor biosynthesis; thiamine diphosphate biosynthesis. Catalyzes the rearrangement of 1-deoxy-D-xylulose 5-phosphate (DXP) to produce the thiazole phosphate moiety of thiamine. Sulfur is provided by the thiocarboxylate moiety of the carrier protein ThiS. In vitro, sulfur can be provided by H(2)S. The protein is Thiazole synthase of Phocaeicola vulgatus (strain ATCC 8482 / DSM 1447 / JCM 5826 / CCUG 4940 / NBRC 14291 / NCTC 11154) (Bacteroides vulgatus).